Here is an 814-residue protein sequence, read N- to C-terminus: G-type lectin S-receptor-like serine/threonine-protein kinase At1g61400 (814 aa).

A signal peptide spans 1–34; sequence MDFLFLLLERKNKHMGKKRVVLLWLSIFISFSSA. The Bulb-type lectin domain maps to 35-154; that stretch reads EITEESPLSI…VSGRTLWESF (120 aa). At 35–436 the chain is on the extracellular side; the sequence is EITEESPLSI…ELDVNKRKKT (402 aa). Residues Asn63, Asn104, Asn127, and Asn246 are each glycosylated (N-linked (GlcNAc...) asparagine). The EGF-like; atypical domain maps to 288–324; it reads PANSCDIYGVCGPFGFCVISVPPKCKCFKGFIPKSIE. 2 disulfides stabilise this stretch: Cys292/Cys304 and Cys298/Cys312. N-linked (GlcNAc...) asparagine glycans are attached at residues Asn330, Asn346, and Asn385. The 83-residue stretch at 343 to 425 folds into the PAN domain; the sequence is CQGNSTGKDA…GELLSIRLAR (83 aa). Intrachain disulfides connect Cys378–Cys399 and Cys382–Cys388. Residues 437-457 form a helical membrane-spanning segment; that stretch reads IIAITVSLTLFVILGFTAFGF. The Cytoplasmic segment spans residues 458 to 814; it reads WRRRVEQNAL…EMTESVIHGR (357 aa). One can recognise a Protein kinase domain in the interval 500–785; the sequence is FSLSNKLGHG…DLPLPKQPTF (286 aa). ATP is bound by residues 506 to 514 and Lys528; that span reads LGHGGFGSV. Ser534 and Ser549 each carry phosphoserine. A caM-binding region spans residues 589–606; sequence KKRLEIDWPKRFDIIQGI. Asp625 functions as the Proton acceptor in the catalytic mechanism. Phosphoserine is present on residues Ser629 and Ser642. Thr659 bears the Phosphothreonine mark. Phosphoserine occurs at positions 702 and 796.

Belongs to the protein kinase superfamily. Ser/Thr protein kinase family.

The protein resides in the cell membrane. The catalysed reaction is L-seryl-[protein] + ATP = O-phospho-L-seryl-[protein] + ADP + H(+). It catalyses the reaction L-threonyl-[protein] + ATP = O-phospho-L-threonyl-[protein] + ADP + H(+). The sequence is that of G-type lectin S-receptor-like serine/threonine-protein kinase At1g61400 from Arabidopsis thaliana (Mouse-ear cress).